The primary structure comprises 60 residues: Beta-defensin 8 (60 aa).

The N-terminal stretch at 1 to 22 is a signal peptide; the sequence is MRIHYLLFTFLLVLLSPLAAFS. Residues 23–25 constitute a propeptide that is removed on maturation; that stretch reads QKI. 3 disulfide bridges follow: cysteine 31–cysteine 58, cysteine 38–cysteine 52, and cysteine 42–cysteine 59.

This sequence belongs to the beta-defensin family. Most highly expressed in testis and heart.

It localises to the secreted. In terms of biological role, a synthetic peptide displays antimicrobial activities against S.aureus, P.aeruginosa, E.coli and B.cepacia. The antimicrobial activity against S.aureus, E.coli and B.cepacia is reduced in raised concentration of NaCl, but its action against P.aeruginosa is independent of NaCl concentration. The sequence is that of Beta-defensin 8 (Defb8) from Mus musculus (Mouse).